The primary structure comprises 288 residues: Energy-coupling factor transporter ATP-binding protein EcfA2 (288 aa).

Residues 3–243 (IVFEAVSHIY…RAELEAIGLG (241 aa)) enclose the ABC transporter domain. ATP is bound at residue 40 to 47 (GPTGSGKS).

The protein belongs to the ABC transporter superfamily. Energy-coupling factor EcfA family. In terms of assembly, forms a stable energy-coupling factor (ECF) transporter complex composed of 2 membrane-embedded substrate-binding proteins (S component), 2 ATP-binding proteins (A component) and 2 transmembrane proteins (T component).

The protein localises to the cell membrane. Functionally, ATP-binding (A) component of a common energy-coupling factor (ECF) ABC-transporter complex. Unlike classic ABC transporters this ECF transporter provides the energy necessary to transport a number of different substrates. This Symbiobacterium thermophilum (strain DSM 24528 / JCM 14929 / IAM 14863 / T) protein is Energy-coupling factor transporter ATP-binding protein EcfA2.